The chain runs to 455 residues: tRNA modification GTPase MnmE (455 aa).

Residues Arg-24, Glu-81, and Lys-120 each contribute to the (6S)-5-formyl-5,6,7,8-tetrahydrofolate site. Residues 216 to 378 form the TrmE-type G domain; it reads GMTVVIAGRP…LREHLKACMG (163 aa). Asn-226 is a K(+) binding site. Residues 226 to 231, 245 to 251, 270 to 273, and 335 to 338 contribute to the GTP site; these read NAGKSS, TDIAGTT, DTAG, and NKAD. Ser-230 serves as a coordination point for Mg(2+). The K(+) site is built by Thr-245, Ile-247, and Thr-250. Thr-251 is a binding site for Mg(2+). Lys-455 lines the (6S)-5-formyl-5,6,7,8-tetrahydrofolate pocket.

The protein belongs to the TRAFAC class TrmE-Era-EngA-EngB-Septin-like GTPase superfamily. TrmE GTPase family. Homodimer. Heterotetramer of two MnmE and two MnmG subunits. K(+) serves as cofactor.

Its subcellular location is the cytoplasm. Functionally, exhibits a very high intrinsic GTPase hydrolysis rate. Involved in the addition of a carboxymethylaminomethyl (cmnm) group at the wobble position (U34) of certain tRNAs, forming tRNA-cmnm(5)s(2)U34. This is tRNA modification GTPase MnmE from Ectopseudomonas mendocina (strain ymp) (Pseudomonas mendocina).